The sequence spans 901 residues: Protein translocase subunit SecA (901 aa).

Residues Gln87, Gly105–Thr109, and Asp512 each bind ATP. Zn(2+) is bound by residues Cys885, Cys887, Cys896, and His897.

It belongs to the SecA family. As to quaternary structure, monomer and homodimer. Part of the essential Sec protein translocation apparatus which comprises SecA, SecYEG and auxiliary proteins SecDF-YajC and YidC. Zn(2+) serves as cofactor.

Its subcellular location is the cell inner membrane. The protein resides in the cytoplasm. It catalyses the reaction ATP + H2O + cellular proteinSide 1 = ADP + phosphate + cellular proteinSide 2.. Its function is as follows. Part of the Sec protein translocase complex. Interacts with the SecYEG preprotein conducting channel. Has a central role in coupling the hydrolysis of ATP to the transfer of proteins into and across the cell membrane, serving both as a receptor for the preprotein-SecB complex and as an ATP-driven molecular motor driving the stepwise translocation of polypeptide chains across the membrane. The polypeptide is Protein translocase subunit SecA (Salmonella schwarzengrund (strain CVM19633)).